Here is an 882-residue protein sequence, read N- to C-terminus: Ubiquitin carboxyl-terminal hydrolase 4 (882 aa).

The Rhodanese domain maps to 182–308 (YDSSLLLIDV…WVSKKGACET (127 aa)). The segment covering 382–399 (KAKSSSTSSVTSSSPAPS) has biased composition (low complexity). Residues 382-411 (KAKSSSTSSVTSSSPAPSQLVRPQTSSMPP) are disordered. The segment covering 402-411 (VRPQTSSMPP) has biased composition (polar residues). The 361-residue stretch at 519–879 (VGLENMGNSC…NAYVLFYHRV (361 aa)) folds into the USP domain. Catalysis depends on C528, which acts as the Nucleophile. The Proton acceptor role is filled by H836.

Belongs to the peptidase C19 family.

Its subcellular location is the cytoplasm. It localises to the late endosome membrane. It carries out the reaction Thiol-dependent hydrolysis of ester, thioester, amide, peptide and isopeptide bonds formed by the C-terminal Gly of ubiquitin (a 76-residue protein attached to proteins as an intracellular targeting signal).. RFU1 is an inhibitor of deubiquitination activity. Functionally, ubiquitin thioesterase that acts at the late endosome/prevacuolar compartment to recover ubiquitin from ubiquitinated membrane proteins en route to the vacuole. Also removes ubiquitin from soluble proteins targeted to proteasomes. Is essential to maintain a normal level of free ubiquitin. Required for promoting coordination of DNA replication and avoids DNA overreplication. The sequence is that of Ubiquitin carboxyl-terminal hydrolase 4 (DOA4) from Vanderwaltozyma polyspora (strain ATCC 22028 / DSM 70294 / BCRC 21397 / CBS 2163 / NBRC 10782 / NRRL Y-8283 / UCD 57-17) (Kluyveromyces polysporus).